The chain runs to 156 residues: RNA polymerase sigma factor SigS (156 aa).

The Polymerase core binding signature appears at 29–44 (EYYQLLLIKMWQLSQI). Positions 126-145 (QFEIAEIMSLSLSTIKLIKM) form a DNA-binding region, H-T-H motif.

Belongs to the sigma-70 factor family.

Sigma factors are initiation factors that promote the attachment of RNA polymerase to specific initiation sites and are then released. Sigma-S contributes to the protection against external stress, thus playing a role in cellular fitness and survival. The protein is RNA polymerase sigma factor SigS (sigS) of Staphylococcus aureus (strain Mu50 / ATCC 700699).